Consider the following 160-residue polypeptide: Troponin C, skeletal muscle (160 aa).

Residue threonine 2 is modified to N-acetylthreonine. EF-hand domains are found at residues glutamate 15–threonine 50, proline 51–glutamate 86, lysine 91–histidine 126, and valine 127–glutamine 160. Residues aspartate 28, aspartate 30, aspartate 34, glutamate 39, aspartate 64, aspartate 66, serine 68, threonine 70, glutamate 75, aspartate 104, asparagine 106, aspartate 108, tyrosine 110, glutamate 115, aspartate 140, asparagine 142, aspartate 144, arginine 146, and glutamate 151 each coordinate Ca(2+).

The protein belongs to the troponin C family. Fast skeletal muscle.

Its function is as follows. Troponin is the central regulatory protein of striated muscle contraction. Tn consists of three components: Tn-I which is the inhibitor of actomyosin ATPase, Tn-T which contains the binding site for tropomyosin and Tn-C. The binding of calcium to Tn-C abolishes the inhibitory action of Tn on actin filaments. This Mus musculus (Mouse) protein is Troponin C, skeletal muscle (Tnnc2).